An 806-amino-acid polypeptide reads, in one-letter code: Acetyl-CoA decarbonylase/synthase complex subunit alpha 1 (806 aa).

Positions 73, 76, 77, 79, 84, and 94 each coordinate [4Fe-4S] cluster. Residue histidine 117 coordinates CO. Histidine 250, cysteine 278, and cysteine 323 together coordinate [Ni-4Fe-4S] cluster. 4Fe-4S ferredoxin-type domains follow at residues 407–436 (DEEF…IPEA) and 446–475 (SYLD…LNII). [4Fe-4S] cluster contacts are provided by cysteine 417, cysteine 420, cysteine 423, cysteine 427, cysteine 455, cysteine 458, cysteine 461, and cysteine 465. Positions 523, 552, and 587 each coordinate [Ni-4Fe-4S] cluster.

The protein belongs to the Ni-containing carbon monoxide dehydrogenase family. Heterotetramer of two alpha and two epsilon subunits. The ACDS complex is made up of alpha, epsilon, beta, gamma and delta subunits with a probable stoichiometry of (alpha(2)epsilon(2))(4)-beta(8)-(gamma(1)delta(1))(8). It depends on [4Fe-4S] cluster as a cofactor. The cofactor is [Ni-4Fe-4S] cluster.

It carries out the reaction CO + 2 oxidized [2Fe-2S]-[ferredoxin] + H2O = 2 reduced [2Fe-2S]-[ferredoxin] + CO2 + 2 H(+). It participates in one-carbon metabolism; methanogenesis from acetate. Its activity is regulated as follows. Carbon monoxide dehydrogenase activity is inhibited by KCN and is rapidly inactivated by O(2). Its function is as follows. Part of the ACDS complex that catalyzes the reversible cleavage of acetyl-CoA, allowing growth on acetate as sole source of carbon and energy. The alpha-epsilon subcomponent functions as a carbon monoxide dehydrogenase. This Methanosarcina barkeri (strain Fusaro / DSM 804) protein is Acetyl-CoA decarbonylase/synthase complex subunit alpha 1.